Consider the following 555-residue polypeptide: La-related protein 7 (555 aa).

Residues 36-127 (RSRVKQLLSD…RRKEPLGETP (92 aa)) form the HTH La-type RNA-binding domain. Residues 133-211 (RTVYVELLPK…PRKPGIFPKT (79 aa)) enclose the RRM domain. Residues 218–327 (PFDAVTQDND…ENKDEELNSL (110 aa)) form a disordered region. Polar residues-rich tracts occupy residues 238 to 251 (KNST…NNMD), 258 to 274 (STVT…STVS), and 284 to 293 (SQSFEASSGE). Positions 295–356 (QFEMSSKMRK…ERLKVGEEVI (62 aa)) form a coiled coil. Over residues 303–327 (RKVEEEKSELKDLSSENKDEELNSL) the composition is skewed to basic and acidic residues. A xRRM domain is found at 425–538 (EFLSGVIVKI…TEKLISKAEK (114 aa)).

Belongs to the LARP7 family. Core component of the 7SK RNP complex. Associates with box C/D small nucleolar ribonucleoprotein (snoRNP) complexes.

It is found in the nucleus. Its subcellular location is the nucleoplasm. In terms of biological role, RNA-binding protein that specifically binds distinct small nuclear RNA (snRNAs) and regulates their processing and function. Specifically binds the 7SK snRNA (7SK RNA) and acts as a core component of the 7SK ribonucleoprotein (RNP) complex, thereby acting as a negative regulator of transcription elongation by RNA polymerase II. The 7SK RNP complex sequesters the positive transcription elongation factor b (P-TEFb) in a large inactive 7SK RNP complex preventing RNA polymerase II phosphorylation and subsequent transcriptional elongation. The 7SK RNP complex also promotes snRNA gene transcription by RNA polymerase II via interaction with the little elongation complex (LEC). LARP7 specifically binds to the highly conserved 3'-terminal U-rich stretch of 7SK RNA; on stimulation, remains associated with 7SK RNA, whereas P-TEFb is released from the complex. LARP7 also acts as a regulator of mRNA splicing fidelity by promoting U6 snRNA processing. Specifically binds U6 snRNAs and associates with a subset of box C/D RNP complexes: promotes U6 snRNA 2'-O-methylation by facilitating U6 snRNA loading into box C/D RNP complexes. U6 snRNA 2'-O-methylation is required for mRNA splicing fidelity. The sequence is that of La-related protein 7 from Danio rerio (Zebrafish).